Here is a 247-residue protein sequence, read N- to C-terminus: Segregation and condensation protein A (247 aa).

Belongs to the ScpA family. Component of a cohesin-like complex composed of ScpA, ScpB and the Smc homodimer, in which ScpA and ScpB bind to the head domain of Smc. The presence of the three proteins is required for the association of the complex with DNA.

The protein localises to the cytoplasm. Its function is as follows. Participates in chromosomal partition during cell division. May act via the formation of a condensin-like complex containing Smc and ScpB that pull DNA away from mid-cell into both cell halves. This chain is Segregation and condensation protein A, found in Bacillus cereus (strain ATCC 10987 / NRS 248).